Consider the following 321-residue polypeptide: Lipoyl synthase (321 aa).

[4Fe-4S] cluster-binding residues include cysteine 68, cysteine 73, cysteine 79, cysteine 94, cysteine 98, cysteine 101, and serine 308. Residues 80–297 (FNHGTATFMI…KAIALDLGFT (218 aa)) enclose the Radical SAM core domain.

The protein belongs to the radical SAM superfamily. Lipoyl synthase family. It depends on [4Fe-4S] cluster as a cofactor.

The protein localises to the cytoplasm. It catalyses the reaction [[Fe-S] cluster scaffold protein carrying a second [4Fe-4S](2+) cluster] + N(6)-octanoyl-L-lysyl-[protein] + 2 oxidized [2Fe-2S]-[ferredoxin] + 2 S-adenosyl-L-methionine + 4 H(+) = [[Fe-S] cluster scaffold protein] + N(6)-[(R)-dihydrolipoyl]-L-lysyl-[protein] + 4 Fe(3+) + 2 hydrogen sulfide + 2 5'-deoxyadenosine + 2 L-methionine + 2 reduced [2Fe-2S]-[ferredoxin]. It participates in protein modification; protein lipoylation via endogenous pathway; protein N(6)-(lipoyl)lysine from octanoyl-[acyl-carrier-protein]: step 2/2. Catalyzes the radical-mediated insertion of two sulfur atoms into the C-6 and C-8 positions of the octanoyl moiety bound to the lipoyl domains of lipoate-dependent enzymes, thereby converting the octanoylated domains into lipoylated derivatives. The polypeptide is Lipoyl synthase (Tolumonas auensis (strain DSM 9187 / NBRC 110442 / TA 4)).